Reading from the N-terminus, the 148-residue chain is Large ribosomal subunit protein bL9 (148 aa).

Belongs to the bacterial ribosomal protein bL9 family.

Its function is as follows. Binds to the 23S rRNA. The polypeptide is Large ribosomal subunit protein bL9 (Azotobacter vinelandii (strain DJ / ATCC BAA-1303)).